The following is a 113-amino-acid chain: Large ribosomal subunit protein uL22 (113 aa).

Belongs to the universal ribosomal protein uL22 family. Part of the 50S ribosomal subunit.

Functionally, this protein binds specifically to 23S rRNA; its binding is stimulated by other ribosomal proteins, e.g. L4, L17, and L20. It is important during the early stages of 50S assembly. It makes multiple contacts with different domains of the 23S rRNA in the assembled 50S subunit and ribosome. In terms of biological role, the globular domain of the protein is located near the polypeptide exit tunnel on the outside of the subunit, while an extended beta-hairpin is found that lines the wall of the exit tunnel in the center of the 70S ribosome. This chain is Large ribosomal subunit protein uL22, found in Halothermothrix orenii (strain H 168 / OCM 544 / DSM 9562).